The following is a 344-amino-acid chain: tRNA N6-adenosine threonylcarbamoyltransferase (344 aa).

2 residues coordinate Fe cation: His112 and His116. Substrate contacts are provided by residues 135-139 (LVSGG), Asp168, Gly181, and Asn271. Asp299 provides a ligand contact to Fe cation. Residues 323–344 (RARPRWPLDPEAEPVRGAGVKA) are disordered.

It belongs to the KAE1 / TsaD family. The cofactor is Fe(2+).

Its subcellular location is the cytoplasm. It catalyses the reaction L-threonylcarbamoyladenylate + adenosine(37) in tRNA = N(6)-L-threonylcarbamoyladenosine(37) in tRNA + AMP + H(+). Required for the formation of a threonylcarbamoyl group on adenosine at position 37 (t(6)A37) in tRNAs that read codons beginning with adenine. Is involved in the transfer of the threonylcarbamoyl moiety of threonylcarbamoyl-AMP (TC-AMP) to the N6 group of A37, together with TsaE and TsaB. TsaD likely plays a direct catalytic role in this reaction. This Erythrobacter litoralis (strain HTCC2594) protein is tRNA N6-adenosine threonylcarbamoyltransferase.